A 959-amino-acid polypeptide reads, in one-letter code: Bifunctional premutilin synthase (959 aa).

A class II diterpene cyclase region spans residues 1 to 542 (MGLSEDLHAR…ALNVPIPRFD (542 aa)). The short motif at 309-312 (DADM) is the DXDD motif element. The active-site For class II diterpene cyclase activity is D311. The interval 543–959 (PSSISTLPAI…TANGSNGIHH (417 aa)) is class I diterpene synthase. The For class I diterpene synthase activity role is filled by D649. The Mg(2+) site is built by D649, D653, and N824. The DDXXD motif signature appears at 649 to 653 (DDYLD). The interval 931–959 (KGTNGVKKINGSSTNGTKVTANGSNGIHH) is disordered. Polar residues predominate over residues 940-959 (NGSSTNGTKVTANGSNGIHH).

The protein belongs to the terpene synthase family. The cofactor is Mg(2+).

The protein operates within secondary metabolite biosynthesis; terpenoid biosynthesis. Functionally, bifunctional premutilin synthase; part of the gene cluster that mediates the biosynthesis of pleuromutilin, a tricyclic diterpene showing antibacterial properties. The geranylgeranyl diphosphate (GGPP) synthase catalyzes the first step in pleuromutilin biosynthesis. GGPP is then substrate of the premutilin synthase (PS) to yield premutilin. Premutilin synthase is a bifunctional enzyme composed of the fusion of a class II diterpene cyclase (DTC) and a class I diterpene synthase (DTS), with the corresponding domains and active sites containing characteristic aspartate-rich motifs. GGPP is first converted to mutildienyl-diphosphate (MPP) at the class II DTC site. MPP is subsequently further cyclized at the class I DTS site, followed by a 1,5-hydride shift and addition of water prior to terminating deprotonation, to yield premutilin. In addition to the aforementioned GGPP synthase and bifunctional diterpene synthase, the cluster also contains three cytochrome P450 monooxygenases, a short-chain alcohol dehydrogenase, and an acyltransferase, involved in the conversion of premutilin to pleuromutilin. The cytochrome P450 monooxygenases P450-1 and P450-2 hydroxylate premutilin at C-11 and C-3, respectively, producing 11-hydroxypremutilin and 3-hydroxypremutilin. The combination of the actions of both ple5 and ple6 leads to the production of 3,11-dihydroxypremutilin. The short chain dehydrogenase SDR further converts 3,11-dihydroxypremutilin into mutilin. The acetyltransferase ATF then acetylates mutilin to produce 14-O-acetylmutilin. Finally, the cytochrome P450 monooxygenase P450-3 catalyzes hydroxylation on the alpha position of the acetyl side chain of 14-O-acetylmutilin to yield pleuromutilin. The sequence is that of Bifunctional premutilin synthase from Clitopilus passeckerianus (Pleurotus passeckerianus).